We begin with the raw amino-acid sequence, 888 residues long: 3-hydroxy-3-methylglutaryl-coenzyme A reductase (888 aa).

The Cytoplasmic portion of the chain corresponds to 1–9; the sequence is MLSRLFRMH. The chain crosses the membrane as a helical span at residues 10 to 39; the sequence is GLFVASHPWEVIVGTVTLTICMMSMNMFTG. Over 40–56 the chain is Lumenal; that stretch reads NNKICGWNYECPKFEED. The chain crosses the membrane as a helical span at residues 57–78; that stretch reads VLSSDIIILTITRCIAILYIYF. An SSD domain is found at 61 to 218; it reads DIIILTITRC…MTFFPACVSL (158 aa). The short motif at 75–78 is the INSIG-binding motif element; the sequence is YIYF. Residues 79–89 are Cytoplasmic-facing; that stretch reads QFQNLRQLGSK. Lysine 89 is covalently cross-linked (Glycyl lysine isopeptide (Lys-Gly) (interchain with G-Cter in ubiquitin)). Residues 90–114 traverse the membrane as a helical segment; it reads YILGIAGLFTIFSSFVFSTVVIHFL. The Lumenal portion of the chain corresponds to 115 to 123; it reads DKELTGLNE. Residues 124-149 traverse the membrane as a helical segment; sequence ALPFFLLLIDLSRASTLAKFALSSNS. The Cytoplasmic portion of the chain corresponds to 150 to 159; that stretch reads QDEVRENIAR. Residues 160–187 traverse the membrane as a helical segment; sequence GMAILGPTFTLDALVECLVIGVGTMSGV. Topologically, residues 188-191 are lumenal; that stretch reads RQLE. The chain crosses the membrane as a helical span at residues 192-220; sequence IMCCFGCMSVLANYFVFMTFFPACVSLVL. The Cytoplasmic portion of the chain corresponds to 221 to 248; it reads ELSRESREGRPIWLLSHFARVLEEEENK. Lysine 248 participates in a covalent cross-link: Glycyl lysine isopeptide (Lys-Gly) (interchain with G-Cter in ubiquitin). Residues 249–275 traverse the membrane as a helical segment; that stretch reads PNPVTQRVKMIMSLGLVLVHAHSRWIA. Residues 276 to 314 are Lumenal-facing; the sequence is DPSPQNSTADTSKVSLGLDENVSKRIEPSVSLWQFYLSK. N-linked (GlcNAc...) asparagine glycosylation is found at asparagine 281 and asparagine 296. The chain crosses the membrane as a helical span at residues 315–339; the sequence is MISMDIEQVITLSLALLLAVKYIFF. The Cytoplasmic segment spans residues 340–888; that stretch reads EQTETESTLS…LQGACTKKTA (549 aa). Residues glutamate 559, lysine 691, and aspartate 767 each act as charge relay system in the active site. The Proton donor role is filled by histidine 866. Phosphoserine; by AMPK is present on serine 872.

The protein belongs to the HMG-CoA reductase family. Homotetramer. Homodimer. Interacts (via its SSD) with INSIG1; the interaction, accelerated by sterols, leads to the recruitment of HMGCR to AMFR/gp78 for its ubiquitination by the sterol-mediated ERAD pathway. Interacts with UBIAD1. In terms of processing, undergoes sterol-mediated ubiquitination and ER-associated degradation (ERAD). Accumulation of sterols in the endoplasmic reticulum (ER) membrane, triggers binding of the reductase to the ER membrane protein INSIG1 or INSIG2. The INSIG1 binding leads to the recruitment of the ubiquitin ligase, AMFR/gp78, RNF139 or RNF145, initiating ubiquitination of the reductase. The ubiquitinated reductase is then extracted from the ER membrane and delivered to cytosolic 26S proteosomes by a mechanism probably mediated by the ATPase Valosin-containing protein VCP/p97. The INSIG2-binding leads to the recruitment of the ubiquitin ligase RNF139, initiating ubiquitination of the reductase. Lys-248 is the main site of ubiquitination. Ubiquitination is enhanced by the presence of a geranylgeranylated protein. Post-translationally, N-glycosylated. Deglycosylated by NGLY1 on release from the endoplasmic reticulum (ER) in a sterol-mediated manner. Phosphorylated. Phosphorylation at Ser-872 reduces the catalytic activity.

The protein resides in the endoplasmic reticulum membrane. The protein localises to the peroxisome membrane. It carries out the reaction (R)-mevalonate + 2 NADP(+) + CoA = (3S)-3-hydroxy-3-methylglutaryl-CoA + 2 NADPH + 2 H(+). The protein operates within metabolic intermediate biosynthesis; (R)-mevalonate biosynthesis; (R)-mevalonate from acetyl-CoA: step 3/3. Its activity is regulated as follows. Regulated by a negative feedback mechanism through sterols and non-sterol metabolites derived from mevalonate. Phosphorylation at Ser-872 down-regulates the catalytic activity. In terms of biological role, catalyzes the conversion of (3S)-hydroxy-3-methylglutaryl-CoA (HMG-CoA) to mevalonic acid, the rate-limiting step in the synthesis of cholesterol and other isoprenoids, thus plays a critical role in cellular cholesterol homeostasis. The polypeptide is 3-hydroxy-3-methylglutaryl-coenzyme A reductase (HMGCR) (Pongo abelii (Sumatran orangutan)).